A 184-amino-acid chain; its full sequence is Glutathione-regulated potassium-efflux system ancillary protein KefG (184 aa).

The protein belongs to the NAD(P)H dehydrogenase (quinone) family. KefG subfamily. In terms of assembly, interacts with KefB.

The protein resides in the cell inner membrane. The enzyme catalyses a quinone + NADH + H(+) = a quinol + NAD(+). It carries out the reaction a quinone + NADPH + H(+) = a quinol + NADP(+). Functionally, regulatory subunit of a potassium efflux system that confers protection against electrophiles. Required for full activity of KefB. In Cronobacter sakazakii (strain ATCC BAA-894) (Enterobacter sakazakii), this protein is Glutathione-regulated potassium-efflux system ancillary protein KefG.